The chain runs to 250 residues: MGAAASIQTTVNTLSERISSKLEQEANASAQTKCDIEIGNFYIRQNHGCNLTVKNMCSADADAQLDAVLSAATETYSGLTPEQKAYVPAMFTAALNIQTSVNTVVRDFENYVKQTCNSSAVVDNKLKIQNVIIDECYGAPGSPTNLEFINTGSSKGNCAIKALMQLTTKATTQIAPKQVAGTGVQFYMIVIGVIILAALFMYYAKRMLFTSTNDKIKLILANKENVHWTTYMDTFFRTSPMVIATTDMQN.

Residue G2 is the site of N-myristoyl glycine; by host attachment. The tract at residues 2 to 12 is targeting to MV membrane; it reads GAAASIQTTVN. Residues 2-183 are Virion surface-facing; it reads GAAASIQTTV…IAPKQVAGTG (182 aa). 3 cysteine pairs are disulfide-bonded: C34–C57, C49–C136, and C116–C158. The helical transmembrane segment at 184 to 204 threads the bilayer; sequence VQFYMIVIGVIILAALFMYYA. Topologically, residues 205–250 are intravirion; sequence KRMLFTSTNDKIKLILANKENVHWTTYMDTFFRTSPMVIATTDMQN.

It belongs to the orthopoxvirus OPG095 family. As to quaternary structure, component of the entry fusion complex (EFC) composed of OPG053/F9, OPG076/O3, OPG086/G3, OPG094/G9, OPG095/L1, OPG099/L5, OPG107/H2, OPG143/A16, OPG104/J5, OPG147/A21 and OPG155/A28. Except for OPG095/L1 and OPG053/F9, each of the EFC proteins is required for assembly or stability of the complex. Post-translationally, myristoylated. Disulfid bonds are oxidized in the cytoplasm by OPG088 protein. In terms of processing, unglycosylated because produced in viral factories instead of the classic ER -Golgi route.

The protein resides in the virion membrane. Functionally, component of the entry fusion complex (EFC), which consists of 11 proteins. During cell infection, this complex mediates entry of the virion core into the host cytoplasm by a two-step mechanism consisting of lipid mixing of the viral and cellular membranes and subsequent pore formation. The polypeptide is Entry-fusion complex associated protein OPG095 (OPG099) (Bos taurus (Bovine)).